Here is a 318-residue protein sequence, read N- to C-terminus: RNA polymerase II transcription factor B subunit 3 (318 aa).

Residues 13-54 form an RING-type zinc finger; it reads CPLCQADRYLNPNMKLLINPECYHKMCESCVDRIFTTGPAQC.

As to quaternary structure, one of the nine subunits forming the core-TFIIH basal transcription factor. Also interacts with skp1 and with the mcs2-mcs6 complex.

It localises to the cytoplasm. The protein localises to the nucleus. Its function is as follows. Acts as a component of the general transcription and DNA repair factor IIH (TFIIH or factor B), which is essential for both basal and activated transcription, and is involved in nucleotide excision repair (NER) of damaged DNA. TFIIH has CTD kinase activity and DNA-dependent ATPase activity, and is essential for polymerase II transcription. The polypeptide is RNA polymerase II transcription factor B subunit 3 (pmh1) (Schizosaccharomyces pombe (strain 972 / ATCC 24843) (Fission yeast)).